We begin with the raw amino-acid sequence, 295 residues long: NADPH-dependent reductive aminase (295 aa).

Positions 1–18 are cleaved as a signal peptide; it reads MSKHIGIFGLGAMGTALA. Position 6–20 (6–20) interacts with NADP(+); sequence GIFGLGAMGTALAAK.

The protein belongs to the HIBADH-related family. In terms of assembly, homodimer. NADPH serves as cofactor.

NADPH-dependent reductive aminase that catalyzes the reductive coupling of a broad set of carbonyl compounds with a variety of primary and secondary amines. Possesses remarkably high activity for the reductive amination of ketones and amines, often with high stereoselectivity and in some cases with ketone:amine ratios as low as 1:1. The cofactor NADPH, the carbonyl compound and the amine are added to the enzyme in that sequence, followed by the release of product, NADP(+) being released at last. RedAm is also able to act in the reverse, oxidative direction and exhibits activity in the dehydrogenation of amines to yield imines. The highest activity is found for 1-methyl-tetrahydroquinoline and acyclic amines are also found to be transformed. In Aspergillus oryzae (strain ATCC 42149 / RIB 40) (Yellow koji mold), this protein is NADPH-dependent reductive aminase.